Reading from the N-terminus, the 236-residue chain is MSRRTRLIAALDTASRSTAQDWADSLKNDVDAIKLGLEFTYACGLDAVKTVSAGHELFLDLKLHDIPHTVASGLTALAPLRPALTTIHASGGSEMIARSREALESAFPADTKRPKLLAVTVLTSMNAEGLLDIGVNATPQEQVLRLGKLAISAGADGLVCSAHEIAPLRDALGDEPVLVVPGIRPAGSASDDQKRIMTPGQAAQAGADWIVVGRPITKAADPVLAARAIMEELASA.

Substrate is bound by residues aspartate 12, lysine 34, 60–69 (DLKLHDIPHT), threonine 123, arginine 184, glutamine 193, glycine 213, and arginine 214. The active-site Proton donor is lysine 62.

It belongs to the OMP decarboxylase family. Type 1 subfamily. In terms of assembly, homodimer.

The catalysed reaction is orotidine 5'-phosphate + H(+) = UMP + CO2. The protein operates within pyrimidine metabolism; UMP biosynthesis via de novo pathway; UMP from orotate: step 2/2. Catalyzes the decarboxylation of orotidine 5'-monophosphate (OMP) to uridine 5'-monophosphate (UMP). This is Orotidine 5'-phosphate decarboxylase from Gluconobacter oxydans (strain 621H) (Gluconobacter suboxydans).